A 483-amino-acid polypeptide reads, in one-letter code: MLIFEHSRKNRLNYSQAPATRPAKNNIPDNLKRKSAPLLPEVSEMDTVRHYTRLSQKNFSIDTEFYPLGSCTMKYNPRACNALAMLPQFLSRHPLAPEDTGQGFLACMYELQEILKDVTGMSAVSLTSMAGAQGELIGITMIRAYHEARGDTERTEIIIPDAAHGTNPATAVMCGYKVIEIPTDRDGDVDMEALKAAVSPRTAGLMLTNPSTLGVFEKKVAEMSRVVHEAGGLLYYDGANLNAVLGKVKPGDMGFDVIHMNLHKTFSTPHGGGGPGAAPVGVADCLLPYLPIPIVAHEQGVYRWLTEKDRPQSIGRLSAHMGNAGVLLRAYIYVRLLGAEGMFRIAEYATLNANYLLAELRKLGFEIAYPSRRASHEFIVTMKEIKDKTGVTAMHLAKRLLDKGFHAPTVYFPLLVPECLLIEPAETESKETLDRFVVAMKEILDEIDTQPEMVKTAPHNMPLRKIDDVKAARELDLVWNPAG.

The residue at position 264 (Lys-264) is an N6-(pyridoxal phosphate)lysine.

It belongs to the GcvP family. C-terminal subunit subfamily. As to quaternary structure, the glycine cleavage system is composed of four proteins: P, T, L and H. In this organism, the P 'protein' is a heterodimer of two subunits. The cofactor is pyridoxal 5'-phosphate.

The catalysed reaction is N(6)-[(R)-lipoyl]-L-lysyl-[glycine-cleavage complex H protein] + glycine + H(+) = N(6)-[(R)-S(8)-aminomethyldihydrolipoyl]-L-lysyl-[glycine-cleavage complex H protein] + CO2. The glycine cleavage system catalyzes the degradation of glycine. The P protein binds the alpha-amino group of glycine through its pyridoxal phosphate cofactor; CO(2) is released and the remaining methylamine moiety is then transferred to the lipoamide cofactor of the H protein. In Nitrosomonas eutropha (strain DSM 101675 / C91 / Nm57), this protein is Probable glycine dehydrogenase (decarboxylating) subunit 2.